Consider the following 286-residue polypeptide: uncharacterized protein (286 aa).

A signal peptide (tat-type signal) is located at residues 1–31; it reads MKKMSRRQFLKGMFGALAAGALTAGGGYGYA. Positions 65, 67, 97, 130, 221, and 223 each coordinate a divalent metal cation.

It belongs to the metallophosphoesterase superfamily. A divalent metal cation is required as a cofactor. In terms of processing, predicted to be exported by the Tat system. The position of the signal peptide cleavage has not been experimentally proven.

This is an uncharacterized protein from Bacillus subtilis (strain 168).